Here is a 361-residue protein sequence, read N- to C-terminus: Histidinol-phosphate aminotransferase (361 aa).

Position 216 is an N6-(pyridoxal phosphate)lysine (Lys216).

The protein belongs to the class-II pyridoxal-phosphate-dependent aminotransferase family. Histidinol-phosphate aminotransferase subfamily. In terms of assembly, homodimer. The cofactor is pyridoxal 5'-phosphate.

The enzyme catalyses L-histidinol phosphate + 2-oxoglutarate = 3-(imidazol-4-yl)-2-oxopropyl phosphate + L-glutamate. It participates in amino-acid biosynthesis; L-histidine biosynthesis; L-histidine from 5-phospho-alpha-D-ribose 1-diphosphate: step 7/9. The sequence is that of Histidinol-phosphate aminotransferase from Francisella philomiragia subsp. philomiragia (strain ATCC 25017 / CCUG 19701 / FSC 153 / O#319-036).